The chain runs to 334 residues: Methionine adenosyltransferase 2 subunit beta (334 aa).

NADP(+) contacts are provided by residues 37–40 (TGLL), 60–62 (FRR), 71–72 (NL), Cys93, Arg97, Tyr159, and Leu185. At Thr309 the chain carries Phosphothreonine. The required for interaction with MAT2A stretch occupies residues 319 to 334 (LWPFLIDKRWRQTVFH).

It belongs to the dTDP-4-dehydrorhamnose reductase family. MAT2B subfamily. Heterotrimer; composed of a catalytic MAT2A homodimer that binds one regulatory MAT2B chain. Heterohexamer; composed of a central, catalytic MAT2A homotetramer flanked on either side by a regulatory MAT2B chain. NADP binding increases the affinity for MAT2A.

The protein operates within amino-acid biosynthesis; S-adenosyl-L-methionine biosynthesis; S-adenosyl-L-methionine from L-methionine: step 1/1. In terms of biological role, regulatory subunit of S-adenosylmethionine synthetase 2, an enzyme that catalyzes the formation of S-adenosylmethionine from methionine and ATP. Regulates MAT2A catalytic activity by changing its kinetic properties, increasing its affinity for L-methionine. Can bind NADP (in vitro). In Mus musculus (Mouse), this protein is Methionine adenosyltransferase 2 subunit beta (Mat2b).